A 565-amino-acid chain; its full sequence is UvrABC system protein C (565 aa).

A GIY-YIG domain is found at 12-89 (EEPGVYIFKN…IRTHKPKYNV (78 aa)). A UVR domain is found at 195 to 230 (KDVLPTLYEKIEQYASNLAFEKAAFLRDQVLVLQNI).

Belongs to the UvrC family. As to quaternary structure, interacts with UvrB in an incision complex.

The protein localises to the cytoplasm. The UvrABC repair system catalyzes the recognition and processing of DNA lesions. UvrC both incises the 5' and 3' sides of the lesion. The N-terminal half is responsible for the 3' incision and the C-terminal half is responsible for the 5' incision. This is UvrABC system protein C from Hydrogenobaculum sp. (strain Y04AAS1).